A 222-amino-acid polypeptide reads, in one-letter code: tRNA (guanine-N(1)-)-methyltransferase (222 aa).

S-adenosyl-L-methionine is bound by residues Gly112 and 132–137; that span reads IGDYVL.

It belongs to the RNA methyltransferase TrmD family. In terms of assembly, homodimer.

The protein resides in the cytoplasm. It carries out the reaction guanosine(37) in tRNA + S-adenosyl-L-methionine = N(1)-methylguanosine(37) in tRNA + S-adenosyl-L-homocysteine + H(+). Its function is as follows. Specifically methylates guanosine-37 in various tRNAs. The polypeptide is tRNA (guanine-N(1)-)-methyltransferase (Azobacteroides pseudotrichonymphae genomovar. CFP2).